A 60-amino-acid chain; its full sequence is MAAKKVVKATPKRSELYTVDAQGKATTSHRACPRCGAGVFMGEHKDRFSCGKCGYTEFKQ.

The Zn(2+) site is built by cysteine 32, cysteine 35, cysteine 50, and cysteine 53. The segment at 32 to 53 (CPRCGAGVFMGEHKDRFSCGKC) adopts a C4-type zinc-finger fold.

Belongs to the eukaryotic ribosomal protein eS31 family. Part of the 30S ribosomal subunit. Zn(2+) is required as a cofactor.

The protein is Small ribosomal subunit protein eS31 of Methanocorpusculum labreanum (strain ATCC 43576 / DSM 4855 / Z).